Here is a 108-residue protein sequence, read N- to C-terminus: Small proline-rich protein 2H (108 aa).

The span at 1 to 11 (MSYQQQQCKQP) shows a compositional bias: low complexity. A disordered region spans residues 1 to 22 (MSYQQQQCKQPCQPPPVCPPPQ). Over residues 12 to 22 (CQPPPVCPPPQ) the composition is skewed to pro residues. 7 tandem repeats follow at residues 21–29 (PQCPEPCPP), 30–38 (PKCPEPCPP), 39–47 (PKCTEPCPP), 48–56 (PKCPEPCPP), 57–65 (PKCPEPCPP), 66–74 (PKCPEPCPP), and 75–83 (PKCTEPCPP). Residues 21-83 (PQCPEPCPPP…PPKCTEPCPP (63 aa)) form a 7 X 9 AA tandem repeats of P-[KQ]-C-[PT]-E-P-C-P-P region. The disordered stretch occupies residues 83–108 (PPSYQQKCPSVQPSPPCQQKCPPKNK). The span at 87 to 108 (QQKCPSVQPSPPCQQKCPPKNK) shows a compositional bias: low complexity.

Belongs to the cornifin (SPRR) family. Expressed weakly in uterus.

The protein localises to the cytoplasm. In terms of biological role, cross-linked envelope protein of keratinocytes. It is a keratinocyte protein that first appears in the cell cytosol, but ultimately becomes cross-linked to membrane proteins by transglutaminase. All that results in the formation of an insoluble envelope beneath the plasma membrane. The protein is Small proline-rich protein 2H (Sprr2h) of Mus musculus (Mouse).